Here is a 468-residue protein sequence, read N- to C-terminus: Soluble pyridine nucleotide transhydrogenase (468 aa).

Position 38-47 (38-47 (ERHYNVGGGC)) interacts with FAD.

Belongs to the class-I pyridine nucleotide-disulfide oxidoreductase family. It depends on FAD as a cofactor.

It localises to the cytoplasm. It catalyses the reaction NAD(+) + NADPH = NADH + NADP(+). Its function is as follows. Conversion of NADPH, generated by peripheral catabolic pathways, to NADH, which can enter the respiratory chain for energy generation. This chain is Soluble pyridine nucleotide transhydrogenase, found in Pectobacterium atrosepticum (strain SCRI 1043 / ATCC BAA-672) (Erwinia carotovora subsp. atroseptica).